The primary structure comprises 737 residues: Probable serine/threonine-protein kinase DDB_G0269628 (737 aa).

The Protein kinase domain occupies 8-488 (YKLIKDLRSG…TLQKMDTSLL (481 aa)). Residues 14-22 (LRSGGEGKA) and lysine 36 each bind ATP. Disordered stretches follow at residues 155-251 (NTIQ…KKCS) and 278-298 (TTAA…SSSN). Residues 156–167 (TIQHSHSSSSLV) are compositionally biased toward polar residues. Over residues 168-229 (NGTTSPTNAT…PSSPSSPLSP (62 aa)) the composition is skewed to low complexity. Catalysis depends on aspartate 349, which acts as the Proton acceptor.

Belongs to the protein kinase superfamily. NEK Ser/Thr protein kinase family. NIMA subfamily.

It carries out the reaction L-seryl-[protein] + ATP = O-phospho-L-seryl-[protein] + ADP + H(+). The catalysed reaction is L-threonyl-[protein] + ATP = O-phospho-L-threonyl-[protein] + ADP + H(+). The protein is Probable serine/threonine-protein kinase DDB_G0269628 of Dictyostelium discoideum (Social amoeba).